Here is a 69-residue protein sequence, read N- to C-terminus: MTETDKKQEQENHAECEDKPKPCCVCKPEKEERDTCILFNGQDSEKCKEFIEKYKECMKGYGFEVPSAN.

Residues C23 and C24 each contribute to the Cu cation site. The 43-residue stretch at 23–65 (CCVCKPEKEERDTCILFNGQDSEKCKEFIEKYKECMKGYGFEV) folds into the CHCH domain. 2 consecutive short sequence motifs (cx9C motif) follow at residues 26-36 (CKPEKEERDTC) and 47-57 (CKEFIEKYKEC). 2 cysteine pairs are disulfide-bonded: C26–C57 and C36–C47.

Belongs to the COX17 family.

The protein localises to the mitochondrion intermembrane space. In terms of biological role, copper chaperone for cytochrome c oxidase (COX). Binds two copper ions and deliver them to the Cu(A) site of COX. The chain is Cytochrome c oxidase copper chaperone (COX17) from Saccharomyces cerevisiae (strain ATCC 204508 / S288c) (Baker's yeast).